The sequence spans 374 residues: UPF0674 endoplasmic reticulum membrane protein C2G5.01 (374 aa).

A helical transmembrane segment spans residues 49–68; it reads FRLEFVILACFFLYVFSFIT. The N-linked (GlcNAc...) asparagine glycan is linked to Asn-287. A disordered region spans residues 335–374; that stretch reads KAAKKKVKSSGDISKLSESDQKKRMERERQRKMRRRAKKM. Positions 349-363 are enriched in basic and acidic residues; the sequence is KLSESDQKKRMERER. A compositionally biased stretch (basic residues) spans 364-374; it reads QRKMRRRAKKM.

This sequence belongs to the UPF0674 family.

The protein resides in the endoplasmic reticulum membrane. In Schizosaccharomyces pombe (strain 972 / ATCC 24843) (Fission yeast), this protein is UPF0674 endoplasmic reticulum membrane protein C2G5.01.